The primary structure comprises 159 residues: Protein C2 (159 aa).

The short motif at 43 to 60 (KKRPPKLTWAPKKKRRKA) is the Nuclear localization signal element. A zinc finger spans residues 65-81 (CGCSYYGGIDCEDGFTH). Positions 102–139 (PNLLPPPEHNNNGDGEQNNNITNQSQPQPAESVGSPDL) are disordered. Low complexity predominate over residues 110 to 124 (HNNNGDGEQNNNITN).

The protein belongs to the geminiviridae transcriptional activator protein family. In terms of assembly, monomer. Suppress local silencing by interacting with and inactivating host adenosine kinase 2 (ADK2) in the cytoplasm. Interacts with and inhibits host SNF1 kinase.

It localises to the host cytoplasm. Its function is as follows. Acts as a suppressor of RNA-mediated gene silencing, also known as post-transcriptional gene silencing (PTGS), a mechanism of plant viral defense that limits the accumulation of viral RNAs. Suppresses the host RNA silencing by inhibiting adenosine kinase 2 (ADK2), a kinase involved in a general methylation pathway. Also suppresses the host basal defense by interacting with and inhibiting SNF1 kinase, a key regulator of cell metabolism implicated in innate antiviral defense. Determines pathogenicity. In Tomato pseudo-curly top virus (TPCTV), this protein is Protein C2.